We begin with the raw amino-acid sequence, 475 residues long: Doublecortin domain-containing protein 2 (475 aa).

2 consecutive Doublecortin domains span residues 17-100 and 139-221; these read KSVL…LNYL and CTIF…LPYS. Positions 234–475 are disordered; the sequence is YGQKASSLPP…EANKASSAVA (242 aa). Polar residues predominate over residues 252–272; that stretch reads GSGNYRQSKSTIGSSDNSSPQ. S270 is modified (phosphoserine). Basic and acidic residues predominate over residues 353 to 365; it reads EKTSKDANQKEDF. The span at 407 to 425 shows a compositional bias: acidic residues; sequence TDEENGEELDQVAEELQPT.

Interacts with DVL1, DVL2 and DVL3. As to expression, expressed in hair cells of the inner ear.

It localises to the cell projection. The protein localises to the cilium. The protein resides in the cytoplasm. It is found in the cytoskeleton. Its subcellular location is the cilium axoneme. It localises to the kinocilium. Its function is as follows. Protein that plays a role in the inhibition of canonical Wnt signaling pathway. May be involved in neuronal migration during development of the cerebral neocortex. Involved in the control of ciliogenesis and ciliary length. The polypeptide is Doublecortin domain-containing protein 2 (Dcdc2) (Mus musculus (Mouse)).